The following is a 524-amino-acid chain: Methylmalonyl-CoA carboxyltransferase 12S subunit (524 aa).

In terms of domain architecture, CoA carboxyltransferase N-terminal spans 13–268 (MEGRVEQLAE…NNTEEASFVN (256 aa)). A carboxyltransferase region spans residues 13–506 (MEGRVEQLAE…RRKIASALEM (494 aa)). Positions 274-506 (SPNTELRDIV…RRKIASALEM (233 aa)) constitute a CoA carboxyltransferase C-terminal domain.

As to quaternary structure, homohexamer. Transcarboxylase is composed of three subunits: 1.3S, 5S, and 12S. The core of the enzyme is composed of six 12S subunits. On each side of the core there are three pairs of 5S subunits. Each 5S dimer is attached to the core by two 1.3S subunits. Thus the total number of chains is 30 (6 + 12 + 12).

The catalysed reaction is (S)-methylmalonyl-CoA + pyruvate = propanoyl-CoA + oxaloacetate. Its function is as follows. The 12S subunit specifically catalyzes the transfer of the carboxyl group of methylmalonyl CoA to the biotin of the 1.3S subunit forming propanoyl-CoA and carboxylated 1.3S-biotin. The polypeptide is Methylmalonyl-CoA carboxyltransferase 12S subunit (Propionibacterium freudenreichii subsp. shermanii).